Here is a 218-residue protein sequence, read N- to C-terminus: uncharacterized protein (218 aa).

This is an uncharacterized protein from Mycoplasma genitalium (strain ATCC 33530 / DSM 19775 / NCTC 10195 / G37) (Mycoplasmoides genitalium).